Reading from the N-terminus, the 611-residue chain is V-type proton ATPase catalytic subunit A (611 aa).

244-251 lines the ATP pocket; it reads GAFGCGKT.

Belongs to the ATPase alpha/beta chains family. In terms of assembly, V-ATPase is a heteromultimeric enzyme made up of two complexes: the ATP-hydrolytic V1 complex and the proton translocation V0 complex. The V1 complex consists of three catalytic AB heterodimers that form a heterohexamer, three peripheral stalks each consisting of EG heterodimers, one central rotor including subunits D and F, and the regulatory subunits C and H. The proton translocation complex V0 consists of the proton transport subunit a, a ring of proteolipid subunits c9c'', rotary subunit d and subunit e.

It is found in the cell membrane. Its subcellular location is the vacuole. The protein resides in the vesicle. It catalyses the reaction ATP + H2O + 4 H(+)(in) = ADP + phosphate + 5 H(+)(out). ATP hydrolysis occurs at the interface between the nucleotide-binding domains of subunits A and B. ATP hydrolysis triggers a conformational change in the subunits D and F, which induces a shift of subunit d. The c-ring is subsequently rotated and results in a continuous proton translocation across the membrane. In terms of biological role, catalytic subunit of the V1 complex of vacuolar(H+)-ATPase (V-ATPase), a multisubunit enzyme composed of a peripheral complex (V1) that hydrolyzes ATP and a membrane integral complex (V0) that translocates protons. V-ATPase is responsible for acidifying and maintaining the pH of intracellular compartments and in some cell types, is targeted to the plasma membrane, where it is responsible for acidifying the extracellular environment. During the trophozoite stage, involved in the acidification of the extracellular space next to the cell membrane. In Plasmodium falciparum (isolate 3D7), this protein is V-type proton ATPase catalytic subunit A.